Reading from the N-terminus, the 233-residue chain is N-(5'-phosphoribosyl)anthranilate isomerase (233 aa).

This sequence belongs to the TrpF family.

It carries out the reaction N-(5-phospho-beta-D-ribosyl)anthranilate = 1-(2-carboxyphenylamino)-1-deoxy-D-ribulose 5-phosphate. It participates in amino-acid biosynthesis; L-tryptophan biosynthesis; L-tryptophan from chorismate: step 3/5. The sequence is that of N-(5'-phosphoribosyl)anthranilate isomerase from Synechococcus sp. (strain JA-2-3B'a(2-13)) (Cyanobacteria bacterium Yellowstone B-Prime).